The chain runs to 275 residues: 3-methyl-2-oxobutanoate hydroxymethyltransferase (275 aa).

D44 and D83 together coordinate Mg(2+). Residues 44 to 45 (DS), D83, and K113 contribute to the 3-methyl-2-oxobutanoate site. Residue E115 participates in Mg(2+) binding. Residue E182 is the Proton acceptor of the active site.

Belongs to the PanB family. Homodecamer; pentamer of dimers. Mg(2+) is required as a cofactor.

It localises to the cytoplasm. It carries out the reaction 3-methyl-2-oxobutanoate + (6R)-5,10-methylene-5,6,7,8-tetrahydrofolate + H2O = 2-dehydropantoate + (6S)-5,6,7,8-tetrahydrofolate. It participates in cofactor biosynthesis; (R)-pantothenate biosynthesis; (R)-pantoate from 3-methyl-2-oxobutanoate: step 1/2. Its function is as follows. Catalyzes the reversible reaction in which hydroxymethyl group from 5,10-methylenetetrahydrofolate is transferred onto alpha-ketoisovalerate to form ketopantoate. This is 3-methyl-2-oxobutanoate hydroxymethyltransferase from Clostridium botulinum (strain Kyoto / Type A2).